Consider the following 623-residue polypeptide: tRNA 5-methylaminomethyl-2-thiouridine biosynthesis bifunctional protein MnmC (623 aa).

A tRNA (mnm(5)s(2)U34)-methyltransferase region spans residues 1–244 (MCVSSSIQTA…KREMLKAIWP (244 aa)). The FAD-dependent cmnm(5)s(2)U34 oxidoreductase stretch occupies residues 268-623 (IGAGIAGLHC…VKIKKPYYSS (356 aa)).

The protein in the N-terminal section; belongs to the methyltransferase superfamily. tRNA (mnm(5)s(2)U34)-methyltransferase family. In the C-terminal section; belongs to the DAO family. FAD serves as cofactor.

The protein localises to the cytoplasm. The catalysed reaction is 5-aminomethyl-2-thiouridine(34) in tRNA + S-adenosyl-L-methionine = 5-methylaminomethyl-2-thiouridine(34) in tRNA + S-adenosyl-L-homocysteine + H(+). Functionally, catalyzes the last two steps in the biosynthesis of 5-methylaminomethyl-2-thiouridine (mnm(5)s(2)U) at the wobble position (U34) in tRNA. Catalyzes the FAD-dependent demodification of cmnm(5)s(2)U34 to nm(5)s(2)U34, followed by the transfer of a methyl group from S-adenosyl-L-methionine to nm(5)s(2)U34, to form mnm(5)s(2)U34. This chain is tRNA 5-methylaminomethyl-2-thiouridine biosynthesis bifunctional protein MnmC, found in Acinetobacter baylyi (strain ATCC 33305 / BD413 / ADP1).